Consider the following 465-residue polypeptide: Gamma-aminobutyric acid receptor subunit gamma-1 (465 aa).

An N-terminal signal peptide occupies residues 1 to 20; the sequence is MGSGKAFLFSPSLLWSQTRG. The Extracellular portion of the chain corresponds to 21–273; it reads VRLIFLLLTL…FDLSRRMGYF (253 aa). N-linked (GlcNAc...) asparagine glycosylation is found at Asn50 and Asn127. An intrachain disulfide couples Cys188 to Cys202. Asn245 carries N-linked (GlcNAc...) asparagine glycosylation. The helical transmembrane segment at 274–294 threads the bilayer; the sequence is TIQTYIPCILTVVLSWVSFWI. The Cytoplasmic portion of the chain corresponds to 295 to 300; the sequence is NKDAVP. The chain crosses the membrane as a helical span at residues 301–320; sequence ARTSLGITTVLTMTTLSTIA. Topologically, residues 321-328 are extracellular; it reads RKSLPKVS. A helical transmembrane segment spans residues 329–349; sequence YVTAMDLFVSVCFIFVFAALM. Topologically, residues 350 to 444 are cytoplasmic; that stretch reads EYGTLHYFTS…RIAKIDSYSR (95 aa). The helical transmembrane segment at 445 to 465 threads the bilayer; that stretch reads IFFPTAFALFNLVYWVGYLYL.

The protein belongs to the ligand-gated ion channel (TC 1.A.9) family. Gamma-aminobutyric acid receptor (TC 1.A.9.5) subfamily. GABRG1 sub-subfamily. As to quaternary structure, heteropentamer, formed by a combination of alpha (GABRA1-6), beta (GABRB1-3), gamma (GABRG1-3), delta (GABRD), epsilon (GABRE), rho (GABRR1-3), pi (GABRP) and theta (GABRQ) chains, each subunit exhibiting distinct physiological and pharmacological properties. May be palmitoylated. Expressed in brain.

It is found in the postsynaptic cell membrane. It localises to the cell membrane. The enzyme catalyses chloride(in) = chloride(out). In terms of biological role, gamma subunit of the heteropentameric ligand-gated chloride channel gated by gamma-aminobutyric acid (GABA), a major inhibitory neurotransmitter in the brain. GABA-gated chloride channels, also named GABA(A) receptors (GABAAR), consist of five subunits arranged around a central pore and contain GABA active binding site(s) located at the alpha and beta subunit interface(s). When activated by GABA, GABAARs selectively allow the flow of chloride anions across the cell membrane down their electrochemical gradient. Chloride influx into the postsynaptic neuron following GABAAR opening decreases the neuron ability to generate a new action potential, thereby reducing nerve transmission. This chain is Gamma-aminobutyric acid receptor subunit gamma-1, found in Mus musculus (Mouse).